We begin with the raw amino-acid sequence, 366 residues long: Ribosomal RNA large subunit methyltransferase M (366 aa).

S-adenosyl-L-methionine is bound by residues serine 188, cysteine 221–glycine 224, aspartate 240, aspartate 260, and aspartate 277. Lysine 306 (proton acceptor) is an active-site residue.

It belongs to the class I-like SAM-binding methyltransferase superfamily. RNA methyltransferase RlmE family. RlmM subfamily. As to quaternary structure, monomer.

The protein resides in the cytoplasm. The enzyme catalyses cytidine(2498) in 23S rRNA + S-adenosyl-L-methionine = 2'-O-methylcytidine(2498) in 23S rRNA + S-adenosyl-L-homocysteine + H(+). Its function is as follows. Catalyzes the 2'-O-methylation at nucleotide C2498 in 23S rRNA. The polypeptide is Ribosomal RNA large subunit methyltransferase M (Escherichia coli O45:K1 (strain S88 / ExPEC)).